The following is an 850-amino-acid chain: AdoMet-dependent rRNA methyltransferase SPB1 (850 aa).

5 residues coordinate S-adenosyl-L-methionine: glycine 58, tryptophan 60, aspartate 78, aspartate 94, and aspartate 119. Lysine 159 (proton acceptor) is an active-site residue. Residues 273–282 show a composition bias toward polar residues; sequence GETNEMTWTP. Disordered stretches follow at residues 273–305, 388–414, 529–569, and 620–646; these read GETN…ARDE, IDKE…NEMK, GISD…RTLN, and AKKN…KQDD. Basic and acidic residues predominate over residues 388–400; sequence IDKELSELGEREK. Residues 397 to 425 are a coiled coil; sequence EREKARKKRERRRRNEMKQREIQRMQMNM. Positions 401-411 are enriched in basic residues; that stretch reads ARKKRERRRRN. 2 stretches are compositionally biased toward acidic residues: residues 537–561 and 628–638; these read DESD…DEDD and SDSEDEEDDIV. The stretch at 746–773 forms a coiled coil; it reads LEAKGRKKMRALRRLEQMKKKSELINED. The tract at residues 811–850 is disordered; sequence KNKGIAGRPRGVTGKYKMVDGTMKKEQRAIRRIKKKMGKK. Over residues 840-850 the composition is skewed to basic residues; it reads IRRIKKKMGKK.

It belongs to the class I-like SAM-binding methyltransferase superfamily. RNA methyltransferase RlmE family. SPB1 subfamily. As to quaternary structure, component of the nucleolar and nucleoplasmic pre-60S ribosomal particle.

The protein resides in the nucleus. The protein localises to the nucleolus. The catalysed reaction is a ribonucleotide in rRNA + S-adenosyl-L-methionine = a 2'-O-methylribonucleotide in rRNA + S-adenosyl-L-homocysteine + H(+). Required for proper assembly of pre-ribosomal particles during the biogenesis of the 60S ribosomal subunit. This is AdoMet-dependent rRNA methyltransferase SPB1 from Yarrowia lipolytica (strain CLIB 122 / E 150) (Yeast).